The chain runs to 357 residues: UDP-N-acetylglucosamine--N-acetylmuramyl-(pentapeptide) pyrophosphoryl-undecaprenol N-acetylglucosamine transferase (357 aa).

UDP-N-acetyl-alpha-D-glucosamine is bound by residues 13–15 (SAG), Arg166, Ser197, and Gln292.

This sequence belongs to the glycosyltransferase 28 family. MurG subfamily.

It is found in the cell membrane. It carries out the reaction di-trans,octa-cis-undecaprenyl diphospho-N-acetyl-alpha-D-muramoyl-L-alanyl-D-glutamyl-meso-2,6-diaminopimeloyl-D-alanyl-D-alanine + UDP-N-acetyl-alpha-D-glucosamine = di-trans,octa-cis-undecaprenyl diphospho-[N-acetyl-alpha-D-glucosaminyl-(1-&gt;4)]-N-acetyl-alpha-D-muramoyl-L-alanyl-D-glutamyl-meso-2,6-diaminopimeloyl-D-alanyl-D-alanine + UDP + H(+). Its pathway is cell wall biogenesis; peptidoglycan biosynthesis. In terms of biological role, cell wall formation. Catalyzes the transfer of a GlcNAc subunit on undecaprenyl-pyrophosphoryl-MurNAc-pentapeptide (lipid intermediate I) to form undecaprenyl-pyrophosphoryl-MurNAc-(pentapeptide)GlcNAc (lipid intermediate II). The protein is UDP-N-acetylglucosamine--N-acetylmuramyl-(pentapeptide) pyrophosphoryl-undecaprenol N-acetylglucosamine transferase of Clostridium novyi (strain NT).